The following is a 390-amino-acid chain: Nucleotide-sugar uncharacterized transporter 1 (390 aa).

Helical transmembrane passes span 61-81 (ICGP…IIFM), 89-109 (IGFE…YLLM), 128-148 (SLLP…LANV), 155-175 (VGFY…AEFL), 182-201 (SFMK…VATV), 206-228 (FSLF…KILW), 249-269 (ITLL…ALSF), 278-298 (AILV…LALG), 306-326 (VVLG…IFGS), and 329-349 (GFIS…YTYL). Over residues 356-365 (LKTSSSSSAL) the composition is skewed to low complexity. Residues 356-390 (LKTSSSSSALSEKKSRFSDLKDDDKNLEPYGSEAV) are disordered. Positions 366-382 (SEKKSRFSDLKDDDKNL) are enriched in basic and acidic residues.

It belongs to the TPT transporter family. TPT (TC 2.A.7.9) subfamily.

The protein localises to the membrane. The sequence is that of Nucleotide-sugar uncharacterized transporter 1 from Arabidopsis thaliana (Mouse-ear cress).